The primary structure comprises 250 residues: Cell division protein ZapD (250 aa).

The protein belongs to the ZapD family. Interacts with FtsZ.

It localises to the cytoplasm. Cell division factor that enhances FtsZ-ring assembly. Directly interacts with FtsZ and promotes bundling of FtsZ protofilaments, with a reduction in FtsZ GTPase activity. The polypeptide is Cell division protein ZapD (Yersinia enterocolitica serotype O:8 / biotype 1B (strain NCTC 13174 / 8081)).